The sequence spans 827 residues: MNLSRRDFMKANAALAAASVAGLIIPVKNVNAADTSITWDKAVCRFCGTGCAVLVGTKDGRVVASQGDPDAEVNRGLNCIKGYFLPKIMYGKDRLTHPMLRMKNGQYDKEGEFTPVTWDFAFKTMAEKFKSALKAKGPNGVGMFTSGQSTIFEGVAKSKLFKAGLLSNNIDPNARHCMASAAVAFVRTFGIDEPMGCYDDIEHADAFVLWGSNMAEMHPILWSRISDRRLANPDTVSVNVLSTFEHRSFELADLGILLKPQSDLAILNYIANYLIENNAINREFIEKHTKFKRGETDIGYGLRPQDPREQTAKNVKTAGKMYDSSFEEFKKLVAPYTLEKAHEISGVPKEQLEKLAKLYADPNKKVVSYWTMGINQHTRGVWANHLIYNIHLLTGKISLPGCGPFSLTGQPSACGTAREVGTFIHRLPADLVVIKPEHRKIAEKIWKLPEGLISDKLGFHAVAQSRALKDGKMQVLWQMCNNNMQAGPNINEETYPGWRNPDNFIVVSDPYPTVSALSADLILPTAMWVEKEGAYGNAERRTQFWRQQVKAPGEAKSDLWQLVEFSKYFTTDEVWPAEILAKNPAYQGKTLYEVLYLNGQVNQYSNDELKGRLNDEAYHFGFYIQKGLFEEYASFGRGHGHDLADFDTYHKARGLRWPVVDGKETLWRYREGYDPYVKAGEGVSFYGQADKRAVILAVPYEPPAEVPDRKYDLWLTTGRILEHWHTGSMTRRVPELHRSFPNNLVWMNPNDAKKRGLKHGDKIKVISRRGEITSYIDTRGRNKCPEGLIYTTFFDAGQLANKLILDATDPISKETDFKKCAVKVVKA.

The segment at residues 1-32 (MNLSRRDFMKANAALAAASVAGLIIPVKNVNA) is a signal peptide (tat-type signal). A 4Fe-4S Mo/W bis-MGD-type domain is found at 37 to 93 (ITWDKAVCRFCGTGCAVLVGTKDGRVVASQGDPDAEVNRGLNCIKGYFLPKIMYGKD). [4Fe-4S] cluster contacts are provided by Cys-44, Cys-47, Cys-51, and Cys-79. Mo-bis(molybdopterin guanine dinucleotide) contacts are provided by residues Lys-81, Gln-148, Asn-173, Cys-177, 210–217 (WGSNMAEM), 242–246 (STFEH), 261–263 (QSD), Met-372, Gln-376, Asn-482, 508–509 (SD), Lys-531, Asp-558, and 717–726 (TGRILEHWHT). Phe-793 provides a ligand contact to substrate. Residues Asn-801 and Lys-818 each coordinate Mo-bis(molybdopterin guanine dinucleotide).

Belongs to the prokaryotic molybdopterin-containing oxidoreductase family. NasA/NapA/NarB subfamily. As to quaternary structure, component of the periplasmic nitrate reductase NapAB complex composed of NapA and NapB. It depends on [4Fe-4S] cluster as a cofactor. Requires Mo-bis(molybdopterin guanine dinucleotide) as cofactor. Post-translationally, predicted to be exported by the Tat system. The position of the signal peptide cleavage has not been experimentally proven.

It localises to the periplasm. The enzyme catalyses 2 Fe(II)-[cytochrome] + nitrate + 2 H(+) = 2 Fe(III)-[cytochrome] + nitrite + H2O. Its function is as follows. Catalytic subunit of the periplasmic nitrate reductase complex NapAB. Receives electrons from NapB and catalyzes the reduction of nitrate to nitrite. This chain is Periplasmic nitrate reductase, found in Histophilus somni (strain 2336) (Haemophilus somnus).